Here is a 326-residue protein sequence, read N- to C-terminus: tRNA dimethylallyltransferase (326 aa).

G18 to S25 is a binding site for ATP. T20–S25 provides a ligand contact to substrate. Interaction with substrate tRNA stretches follow at residues D43 to Q46 and Q167 to R171.

This sequence belongs to the IPP transferase family. In terms of assembly, monomer. Requires Mg(2+) as cofactor.

It carries out the reaction adenosine(37) in tRNA + dimethylallyl diphosphate = N(6)-dimethylallyladenosine(37) in tRNA + diphosphate. Its function is as follows. Catalyzes the transfer of a dimethylallyl group onto the adenine at position 37 in tRNAs that read codons beginning with uridine, leading to the formation of N6-(dimethylallyl)adenosine (i(6)A). The protein is tRNA dimethylallyltransferase of Rhodospirillum rubrum (strain ATCC 11170 / ATH 1.1.1 / DSM 467 / LMG 4362 / NCIMB 8255 / S1).